A 147-amino-acid chain; its full sequence is Hemoglobin subunit gamma (147 aa).

Residues 3-147 form the Globin domain; the sequence is HFTAEEKAAI…VANALAYKYH (145 aa). Heme b-binding residues include His64 and His93.

Belongs to the globin family. Heterotetramer of two alpha chains and two gamma chains in fetal hemoglobin (Hb F). Red blood cells.

Its function is as follows. Gamma chains make up the fetal hemoglobin F, in combination with alpha chains. This is Hemoglobin subunit gamma (HBG) from Elephas maximus (Indian elephant).